A 210-amino-acid polypeptide reads, in one-letter code: Claudin-4 (210 aa).

Residues 1–7 are Cytoplasmic-facing; sequence MASMGLQ. Positions 1-103 are interaction with EPHA2; the sequence is MASMGLQVLG…GMLLSVVGGK (103 aa). A helical transmembrane segment spans residues 8-28; that stretch reads VLGISLAVLGWLGIILSCALP. Topologically, residues 29-81 are extracellular; it reads MWRVTAFIGSNIVTAQTSWEGLWMNCVVQSTGQMQCKMYDSMLALPQDLQAAR. An intrachain disulfide couples Cys-54 to Cys-64. A helical membrane pass occupies residues 82–102; that stretch reads ALMVISIIVGALGMLLSVVGG. Residues 103–116 lie on the Cytoplasmic side of the membrane; it reads KCTNCMEDETVKAK. The helical transmembrane segment at 117–137 threads the bilayer; that stretch reads IMITAGAVFIVASMLIMVPVS. Residues 138–160 lie on the Extracellular side of the membrane; the sequence is WTAHNVIRDFYNPMVASGQKREM. Residues 161–181 form a helical membrane-spanning segment; the sequence is GASLYVGWAASGLLLLGGGLL. At 182 to 210 the chain is on the cytoplasmic side; the sequence is CCSCPPRSNDKPYSAKYSAARSVPASNYV. A Phosphotyrosine; by EPHA2 modification is found at Tyr-209. An interactions with TJP1, TJP2 and TJP3 region spans residues 209–210; it reads YV.

It belongs to the claudin family. In terms of assembly, can form heteropolymeric strands with other claudins. Interacts with CLDN8. Interacts with CLDN1. Directly interacts with TJP1/ZO-1, TJP2/ZO-2 and TJP3/ZO-3. Interacts with EPHA2; phosphorylates CLDN4 and may regulate tight junctions. In terms of processing, phosphorylated. Phosphorylation by EPHA2 is stimulated by EFNA1 and alters interaction with TJP1. As to expression, expressed primarily in lung and kidney. Present in both cortical and medullar collecting ducts (at protein level).

It localises to the cell junction. The protein localises to the tight junction. The protein resides in the cell membrane. The enzyme catalyses chloride(in) = chloride(out). It catalyses the reaction bromide(in) = bromide(out). The catalysed reaction is iodide(out) = iodide(in). It carries out the reaction fluoride(in) = fluoride(out). Can associate with other claudins to regulate tight junction structural and functional strand dynamics. May coassemble with CLDN8 into tight junction strands containing anion-selective channels that convey paracellular chloride permeability in renal collecting ducts. May integrate into CLDN3 strands to modulate localized tight junction barrier properties. May disrupt strand assembly of channel-forming CLDN2 and CLDN15 and inhibit cation conductance. Cannot form tight junction strands on its own. The chain is Claudin-4 from Mus musculus (Mouse).